The primary structure comprises 224 residues: Holliday junction branch migration complex subunit RuvA (224 aa).

Residues 1–64 form a domain I region; the sequence is MIGRLSGVLV…EDLLQLYGFP (64 aa). Residues 65–143 are domain II; sequence TLLEKEWHRL…EVMAMGGTLE (79 aa). The flexible linker stretch occupies residues 144–171; the sequence is AALDGVIEDGMAASEGIEPPSAARPAVP. The segment at 172 to 224 is domain III; it reads SAASDQAGALSALVNLGYGQGEAASAVATAAGEGAVGETDIIRAALRLLAPKG.

The protein belongs to the RuvA family. In terms of assembly, homotetramer. Forms an RuvA(8)-RuvB(12)-Holliday junction (HJ) complex. HJ DNA is sandwiched between 2 RuvA tetramers; dsDNA enters through RuvA and exits via RuvB. An RuvB hexamer assembles on each DNA strand where it exits the tetramer. Each RuvB hexamer is contacted by two RuvA subunits (via domain III) on 2 adjacent RuvB subunits; this complex drives branch migration. In the full resolvosome a probable DNA-RuvA(4)-RuvB(12)-RuvC(2) complex forms which resolves the HJ.

It localises to the cytoplasm. The RuvA-RuvB-RuvC complex processes Holliday junction (HJ) DNA during genetic recombination and DNA repair, while the RuvA-RuvB complex plays an important role in the rescue of blocked DNA replication forks via replication fork reversal (RFR). RuvA specifically binds to HJ cruciform DNA, conferring on it an open structure. The RuvB hexamer acts as an ATP-dependent pump, pulling dsDNA into and through the RuvAB complex. HJ branch migration allows RuvC to scan DNA until it finds its consensus sequence, where it cleaves and resolves the cruciform DNA. This chain is Holliday junction branch migration complex subunit RuvA, found in Dinoroseobacter shibae (strain DSM 16493 / NCIMB 14021 / DFL 12).